We begin with the raw amino-acid sequence, 507 residues long: Glycogen synthase (507 aa).

An ADP-alpha-D-glucose-binding site is contributed by K15.

It belongs to the glycosyltransferase 1 family. Bacterial/plant glycogen synthase subfamily.

The catalysed reaction is [(1-&gt;4)-alpha-D-glucosyl](n) + ADP-alpha-D-glucose = [(1-&gt;4)-alpha-D-glucosyl](n+1) + ADP + H(+). It participates in glycan biosynthesis; glycogen biosynthesis. Its function is as follows. Synthesizes alpha-1,4-glucan chains using ADP-glucose. This chain is Glycogen synthase, found in Rhodopirellula baltica (strain DSM 10527 / NCIMB 13988 / SH1).